The following is a 226-amino-acid chain: UPF0173 metal-dependent hydrolase CHY_0920 (226 aa).

This sequence belongs to the UPF0173 family.

This Carboxydothermus hydrogenoformans (strain ATCC BAA-161 / DSM 6008 / Z-2901) protein is UPF0173 metal-dependent hydrolase CHY_0920.